We begin with the raw amino-acid sequence, 283 residues long: ATP phosphoribosyltransferase (283 aa).

This sequence belongs to the ATP phosphoribosyltransferase family. Long subfamily. Equilibrium between an active dimeric form, an inactive hexameric form and higher aggregates. Interconversion between the various forms is largely reversible and is influenced by the natural substrates and inhibitors of the enzyme. Mg(2+) serves as cofactor.

Its subcellular location is the cytoplasm. The catalysed reaction is 1-(5-phospho-beta-D-ribosyl)-ATP + diphosphate = 5-phospho-alpha-D-ribose 1-diphosphate + ATP. It functions in the pathway amino-acid biosynthesis; L-histidine biosynthesis; L-histidine from 5-phospho-alpha-D-ribose 1-diphosphate: step 1/9. Its activity is regulated as follows. Feedback inhibited by histidine. In terms of biological role, catalyzes the condensation of ATP and 5-phosphoribose 1-diphosphate to form N'-(5'-phosphoribosyl)-ATP (PR-ATP). Has a crucial role in the pathway because the rate of histidine biosynthesis seems to be controlled primarily by regulation of HisG enzymatic activity. The polypeptide is ATP phosphoribosyltransferase (Mycobacterium sp. (strain JLS)).